A 425-amino-acid polypeptide reads, in one-letter code: Aromatic prenyl transferase ptmE (425 aa).

Residues 83–84 (GI) and glutamate 92 each bind L-tryptophan. Substrate-binding residues include arginine 107, lysine 198, tyrosine 200, arginine 265, lysine 267, tyrosine 269, tyrosine 345, tyrosine 410, and tyrosine 414.

This sequence belongs to the tryptophan dimethylallyltransferase family. As to quaternary structure, homodimer.

It functions in the pathway secondary metabolite biosynthesis. Its function is as follows. Aromatic prenyl transferase; part of the gene cluster that mediates the biosynthesis of the indole diterpenes penitrems. The geranylgeranyl diphosphate (GGPP) synthase ptmG catalyzes the first step in penitrem biosynthesis via conversion of farnesyl pyrophosphate and isopentyl pyrophosphate into geranylgeranyl pyrophosphate (GGPP). Condensation of indole-3-glycerol phosphate with GGPP by the prenyl transferase ptmC then forms 3-geranylgeranylindole (3-GGI). Epoxidation by the FAD-dependent monooxygenase ptmM leads to a epoxidized-GGI that is substrate of the terpene cyclase ptmB for cyclization to yield paspaline. Paspaline is subsequently converted to 13-desoxypaxilline by the cytochrome P450 monooxygenase ptmP, the latter being then converted to paxilline by the cytochrome P450 monooxygenase ptmQ. Paxilline is converted to beta-paxitriol via C-10 ketoreduction by the short-chain dehydrogenase ptmH which can be monoprenylated at the C-20 by the indole diterpene prenyltransferase ptmD. A two-step elimination (acetylation and elimination) process performed by the O-acetyltransferase ptmV and ptmI leads to the production of the prenylated form of penijanthine. The FAD-linked oxidoreductase ptmO then converts the prenylated form of penijanthine into PC-M5 which is in turn transformed into PC-M4 by the aromatic dimethylallyltransferase ptmE. Five sequential oxidative transformations performed by the cytochrome P450 monooxygenases ptmK, ptmU, ptmL, ptmN and ptmJ yield the various penitrem compounds. PtmK, ptmU and ptmM are involved in the formation of the key bicyclic ring of penitrem C via the formation of the intermediates secopenitrem D and penitrem D. PtmL catalyzes the epoxidation of penitrem D and C to yield penitrem B and F, respectively. PtmJ catalyzes the last benzylic hydroxylation to convert penitrem B to prenitrem E and penitrem F to penitrem A. This Penicillium ochrochloron protein is Aromatic prenyl transferase ptmE.